The sequence spans 362 residues: Histidinol-phosphate aminotransferase (362 aa).

An N6-(pyridoxal phosphate)lysine modification is found at lysine 218.

The protein belongs to the class-II pyridoxal-phosphate-dependent aminotransferase family. Histidinol-phosphate aminotransferase subfamily. As to quaternary structure, homodimer. Pyridoxal 5'-phosphate is required as a cofactor.

It catalyses the reaction L-histidinol phosphate + 2-oxoglutarate = 3-(imidazol-4-yl)-2-oxopropyl phosphate + L-glutamate. The protein operates within amino-acid biosynthesis; L-histidine biosynthesis; L-histidine from 5-phospho-alpha-D-ribose 1-diphosphate: step 7/9. This Ruegeria sp. (strain TM1040) (Silicibacter sp.) protein is Histidinol-phosphate aminotransferase.